The sequence spans 1409 residues: Copia protein (1409 aa).

The segment at 230–247 (VKCHHCGREGHIKKDCFH) adopts a CCHC-type zinc-finger fold. The For protease activity role is filled by Asp292. Residues 476 to 644 (HIKRPLFVVH…TPYEMWHNKK (169 aa)) enclose the Integrase catalytic domain. Disordered regions lie at residues 760–780 (SKESENKNFPNDSRKIIQTEF) and 805–851 (NESK…NDGI). A compositionally biased stretch (basic and acidic residues) spans 827 to 841 (ESRESETAEHLKEIG).

This Drosophila melanogaster (Fruit fly) protein is Copia protein (GIP).